The chain runs to 310 residues: L-lactate dehydrogenase (310 aa).

NAD(+)-binding positions include V11, D32, Y62, and 76–77 (GV). Residues Q79, R85, and 117-120 (NPVD) contribute to the substrate site. NAD(+) is bound by residues 115–117 (ASN) and S140. Residue 145–148 (DTAR) participates in substrate binding. Residues R150 and H165 each coordinate beta-D-fructose 1,6-bisphosphate. Residue H172 is the Proton acceptor of the active site. T227 provides a ligand contact to substrate.

This sequence belongs to the LDH/MDH superfamily. LDH family. Homotetramer.

The protein resides in the cytoplasm. It catalyses the reaction (S)-lactate + NAD(+) = pyruvate + NADH + H(+). The protein operates within fermentation; pyruvate fermentation to lactate; (S)-lactate from pyruvate: step 1/1. Allosterically activated by fructose 1,6-bisphosphate (FBP). Catalyzes the conversion of lactate to pyruvate. The protein is L-lactate dehydrogenase of Allorhizobium ampelinum (strain ATCC BAA-846 / DSM 112012 / S4) (Agrobacterium vitis (strain S4)).